Consider the following 311-residue polypeptide: MAQFQIECIESRTDGARGQYGSFVIEPLNQGQGITLGNALRRSILSDLEGTAIVAVRIAGVNHEFSTIPGVREDVLEILLNLKEVVFKSYNKESQIGRIRVQGPAIVTAGLFELSSDIEVVDPRQYIATICNNTIFEMEFKIEKNCGYRLAEKAVDELSVDFLQVDSVFMPVNKVNYKVEEVRIGSNSIKDRLIIQIWTNGSISPQEAISQGATVLTNLFCSLRNLDFKSADNYRSKEDKKISQVLIEELQLSVRAYNCLKRAQIHSIADLLDYSQEELLEIKNFGQKSAEEVIYALQKKLGISLPKEKSD.

The alpha N-terminal domain (alpha-NTD) stretch occupies residues 1-227; that stretch reads MAQFQIECIE…NLFCSLRNLD (227 aa). Residues 239–311 form an alpha C-terminal domain (alpha-CTD) region; the sequence is DKKISQVLIE…GISLPKEKSD (73 aa).

The protein belongs to the RNA polymerase alpha chain family. In plastids the minimal PEP RNA polymerase catalytic core is composed of four subunits: alpha, beta, beta', and beta''. When a (nuclear-encoded) sigma factor is associated with the core the holoenzyme is formed, which can initiate transcription.

The protein resides in the plastid. Its subcellular location is the chloroplast. The catalysed reaction is RNA(n) + a ribonucleoside 5'-triphosphate = RNA(n+1) + diphosphate. Functionally, DNA-dependent RNA polymerase catalyzes the transcription of DNA into RNA using the four ribonucleoside triphosphates as substrates. The protein is DNA-directed RNA polymerase subunit alpha of Pyropia yezoensis (Susabi-nori).